Consider the following 374-residue polypeptide: MRDPAPSDTSKKRVIVGMSGGVDSSVSALLLIEQGYEVEGLFMKNWEEDDGTEYCTAMDDLADAQAVCDKIGIKLHTANFAAEYWDNVFEHFLAEYKAGRTPNPDILCNREIKFKAFLDYAMMLGADLIATGHYVRRRDIDGRTELLKGLDPNKDQSYFLHAVGGEQIAKTLFPVGELEKPEVRAIAEKYELATAKKKDSTGICFIGERRFSDFLKQYLPAQPGEIKTTEGEVIGRHHGLMYHTIGQRQGLGIGGLKDAGDEPWYVLRKDLDTNELIVGQGNNHPWLFSSALLASEIYWVNPIDLSQPLRLTAKVRYRQSDQACTLEKTDTGYRAVFDEPQRAVTPGQSVVFYDGEICLGGGVIEVAEPWSGQA.

Residues 17 to 24 (GMSGGVDS) and M43 contribute to the ATP site. Residues 103 to 105 (NPD) form an interaction with target base in tRNA region. Residue C108 is the Nucleophile of the active site. Residues C108 and C204 are joined by a disulfide bond. G132 provides a ligand contact to ATP. Residues 154 to 156 (KDQ) form an interaction with tRNA region. C204 serves as the catalytic Cysteine persulfide intermediate. Residues 316–317 (RY) form an interaction with tRNA region.

This sequence belongs to the MnmA/TRMU family.

It is found in the cytoplasm. The catalysed reaction is S-sulfanyl-L-cysteinyl-[protein] + uridine(34) in tRNA + AH2 + ATP = 2-thiouridine(34) in tRNA + L-cysteinyl-[protein] + A + AMP + diphosphate + H(+). Catalyzes the 2-thiolation of uridine at the wobble position (U34) of tRNA, leading to the formation of s(2)U34. This Pseudomonas fluorescens (strain Pf0-1) protein is tRNA-specific 2-thiouridylase MnmA.